The chain runs to 502 residues: ATP synthase subunit alpha (502 aa).

169–176 contributes to the ATP binding site; the sequence is GDRQTGKT.

The protein belongs to the ATPase alpha/beta chains family. F-type ATPases have 2 components, CF(1) - the catalytic core - and CF(0) - the membrane proton channel. CF(1) has five subunits: alpha(3), beta(3), gamma(1), delta(1), epsilon(1). CF(0) has three main subunits: a(1), b(2) and c(9-12). The alpha and beta chains form an alternating ring which encloses part of the gamma chain. CF(1) is attached to CF(0) by a central stalk formed by the gamma and epsilon chains, while a peripheral stalk is formed by the delta and b chains.

The protein localises to the cell inner membrane. The catalysed reaction is ATP + H2O + 4 H(+)(in) = ADP + phosphate + 5 H(+)(out). In terms of biological role, produces ATP from ADP in the presence of a proton gradient across the membrane. The alpha chain is a regulatory subunit. The sequence is that of ATP synthase subunit alpha from Kosmotoga olearia (strain ATCC BAA-1733 / DSM 21960 / TBF 19.5.1).